We begin with the raw amino-acid sequence, 95 residues long: MLHTLHRSPWLTDFAALLRLLSEGDELLLLQDGVTAAVDGNRYLESLRNAPIKVYALNEDLIARGLTGQISNDIIPIDYTDFVRLTVKHTSQLAW.

It belongs to the DsrH/TusB family. In terms of assembly, heterohexamer, formed by a dimer of trimers. The hexameric TusBCD complex contains 2 copies each of TusB, TusC and TusD. The TusBCD complex interacts with TusE.

The protein resides in the cytoplasm. In terms of biological role, part of a sulfur-relay system required for 2-thiolation of 5-methylaminomethyl-2-thiouridine (mnm(5)s(2)U) at tRNA wobble positions. The chain is Protein TusB from Escherichia fergusonii (strain ATCC 35469 / DSM 13698 / CCUG 18766 / IAM 14443 / JCM 21226 / LMG 7866 / NBRC 102419 / NCTC 12128 / CDC 0568-73).